A 386-amino-acid chain; its full sequence is MSELIQNVKTSFEQVLGYAPSHIIQAPGRVNLIGEHTDYNDGFVLPCAINYQTVVAAAKREDNIVRVVSVDYGNAVDEFDITQAITFQQDKMWANYIRGVVKCLLARGYSFTGADISVSGNVPQGAGLSSSAALEVVIGQTFKVLFNLEISQAEIALNGQQAENEFVGCNCGIMDQMISAEGRENHAMLLDCRSLETESVSMPEEMAVVIINSNKKRGLVDSEYNTRRQQCEEAARIFGVKALRDVTIEQFNEKVAELDEMVAKRARHVITENDRTVEAAQALRAHDMKRMGELMAESHASMRDDFEITVKEIDTLVEIVKEVIGDQGGVRMTGGGFGGCIVALVPPALVDDVKATVAAKYQAATGLKESIYVCQAKDGAGLVEVL.

A substrate-binding site is contributed by 35-38 (EHTD). ATP-binding positions include Ser-69 and 125–131 (GAGLSSS). Residues Ser-131 and Glu-163 each contribute to the Mg(2+) site. Asp-175 (proton acceptor) is an active-site residue. Substrate is bound at residue Tyr-224.

This sequence belongs to the GHMP kinase family. GalK subfamily.

It is found in the cytoplasm. It catalyses the reaction alpha-D-galactose + ATP = alpha-D-galactose 1-phosphate + ADP + H(+). The protein operates within carbohydrate metabolism; galactose metabolism. Catalyzes the transfer of the gamma-phosphate of ATP to D-galactose to form alpha-D-galactose-1-phosphate (Gal-1-P). This is Galactokinase from Vibrio vulnificus (strain CMCP6).